A 229-amino-acid chain; its full sequence is RNA chaperone ProQ (229 aa).

Residues 105–178 (EAKARVQAQR…PREEKHTPVS (74 aa)) are disordered. Residues 117 to 136 (QQAKKREAAAAAGDKESAPR) are compositionally biased toward basic and acidic residues. Basic residues predominate over residues 137-146 (RERKPRPAAP). Over residues 147–176 (RRKEGAERKPRAEKPAAKAPRAPREEKHTP) the composition is skewed to basic and acidic residues.

It belongs to the ProQ family.

Its subcellular location is the cytoplasm. Its function is as follows. RNA chaperone with significant RNA binding, RNA strand exchange and RNA duplexing activities. May regulate ProP activity through an RNA-based, post-transcriptional mechanism. The chain is RNA chaperone ProQ from Escherichia fergusonii (strain ATCC 35469 / DSM 13698 / CCUG 18766 / IAM 14443 / JCM 21226 / LMG 7866 / NBRC 102419 / NCTC 12128 / CDC 0568-73).